The sequence spans 251 residues: uncharacterized protein (251 aa).

An HTH deoR-type domain is found at T3–K58. The H-T-H motif DNA-binding region spans V20–D39.

This is an uncharacterized protein from Bacillus subtilis (strain 168).